The sequence spans 686 residues: WD repeat-containing protein 93 (686 aa).

The span at 1–10 (MSFPRGSQTQ) shows a compositional bias: polar residues. The segment at 1–40 (MSFPRGSQTQKIKHPIGTRKGPLEVPPPTEKDWPKDDEQD) is disordered. A compositionally biased stretch (basic and acidic residues) spans 29–40 (TEKDWPKDDEQD). The stretch at 410–449 (PCAAPIAVSQLSCSSSYLVLACEDGVLTLWDLAKGFPLGV) is one WD repeat.

The protein is WD repeat-containing protein 93 (WDR93) of Homo sapiens (Human).